The chain runs to 196 residues: Peptidoglycan recognition protein (196 aa).

The N-terminal stretch at 1-23 is a signal peptide; it reads MARLHSAVVLALALSSLLTEIAA. 2 disulfides stabilise this stretch: cysteine 25-cysteine 147 and cysteine 61-cysteine 67. The region spanning 46 to 173 is the N-acetylmuramoyl-L-alanine amidase domain; the sequence is RPVSLVIVQH…RQLIASESPG (128 aa).

This sequence belongs to the N-acetylmuramoyl-L-alanine amidase 2 family. Monomer. In terms of tissue distribution, constitutively expressed in fat body, epithelial cells and hemocytes. Not detected in Malpighian tubules, silk gland or midgut.

Functionally, binds specifically to peptidoglycan and triggers the propenoloxidase cascade which is an important insect defense mechanism. The chain is Peptidoglycan recognition protein from Bombyx mori (Silk moth).